The primary structure comprises 187 residues: Peptidyl-tRNA hydrolase (187 aa).

Tyr-14 contacts tRNA. His-19 acts as the Proton acceptor in catalysis. Positions 63 and 65 each coordinate tRNA.

This sequence belongs to the PTH family. As to quaternary structure, monomer.

The protein localises to the cytoplasm. The catalysed reaction is an N-acyl-L-alpha-aminoacyl-tRNA + H2O = an N-acyl-L-amino acid + a tRNA + H(+). Its function is as follows. Hydrolyzes ribosome-free peptidyl-tRNAs (with 1 or more amino acids incorporated), which drop off the ribosome during protein synthesis, or as a result of ribosome stalling. Catalyzes the release of premature peptidyl moieties from peptidyl-tRNA molecules trapped in stalled 50S ribosomal subunits, and thus maintains levels of free tRNAs and 50S ribosomes. The protein is Peptidyl-tRNA hydrolase of Thermodesulfovibrio yellowstonii (strain ATCC 51303 / DSM 11347 / YP87).